The sequence spans 220 residues: Orotate phosphoribosyltransferase (220 aa).

Residue K26 participates in 5-phospho-alpha-D-ribose 1-diphosphate binding. 34–35 (FF) provides a ligand contact to orotate. Residues 72-73 (YK), R101, K102, K105, H107, and 126-134 (DDVITAGTS) each bind 5-phospho-alpha-D-ribose 1-diphosphate. Orotate is bound by residues T130 and R158.

The protein belongs to the purine/pyrimidine phosphoribosyltransferase family. PyrE subfamily. In terms of assembly, homodimer. Requires Mg(2+) as cofactor.

It catalyses the reaction orotidine 5'-phosphate + diphosphate = orotate + 5-phospho-alpha-D-ribose 1-diphosphate. The protein operates within pyrimidine metabolism; UMP biosynthesis via de novo pathway; UMP from orotate: step 1/2. Its function is as follows. Catalyzes the transfer of a ribosyl phosphate group from 5-phosphoribose 1-diphosphate to orotate, leading to the formation of orotidine monophosphate (OMP). The protein is Orotate phosphoribosyltransferase of Bordetella avium (strain 197N).